The sequence spans 219 residues: Cytidylate kinase (219 aa).

21–29 is a binding site for ATP; that stretch reads GPAASGKGT.

The protein belongs to the cytidylate kinase family. Type 1 subfamily.

Its subcellular location is the cytoplasm. The enzyme catalyses CMP + ATP = CDP + ADP. The catalysed reaction is dCMP + ATP = dCDP + ADP. This chain is Cytidylate kinase, found in Rickettsia rickettsii (strain Iowa).